We begin with the raw amino-acid sequence, 588 residues long: Ankyrin repeat protein OPG003 (588 aa).

ANK repeat units lie at residues 69-101 (CGNS…NFDS), 175-223 (DGLT…NINA), 227-259 (IGNT…DTRI), 300-336 (EGQH…QKDE), and 339-368 (NTMT…DINL). Residues 557-574 (LPPEIMRNIITKLSDYHL) form a PRANC/F-box-like region.

This sequence belongs to the orthopoxvirus OPG003 family.

Functionally, may be involved in virus-host protein interaction through the ankyrin repeats and PRANC regions. This is Ankyrin repeat protein OPG003 (OPG003) from Cynomys gunnisoni (Gunnison's prairie dog).